The sequence spans 180 residues: Shikimate kinase (180 aa).

19 to 24 provides a ligand contact to ATP; sequence GAGKTT. Position 23 (threonine 23) interacts with Mg(2+). Substrate-binding residues include aspartate 41, arginine 65, and glycine 87. Arginine 125 is an ATP binding site. Arginine 144 provides a ligand contact to substrate.

It belongs to the shikimate kinase family. In terms of assembly, monomer. The cofactor is Mg(2+).

The protein localises to the cytoplasm. It catalyses the reaction shikimate + ATP = 3-phosphoshikimate + ADP + H(+). Its pathway is metabolic intermediate biosynthesis; chorismate biosynthesis; chorismate from D-erythrose 4-phosphate and phosphoenolpyruvate: step 5/7. Its function is as follows. Catalyzes the specific phosphorylation of the 3-hydroxyl group of shikimic acid using ATP as a cosubstrate. This Acinetobacter baumannii (strain SDF) protein is Shikimate kinase.